The following is a 125-amino-acid chain: MIIGLGVDIIEIARIKKVYNKFPWKFVNKLFSDREQKKLMTLHNPNEYISGRFAAKEAVAKAFGTGIGQVRWKDIEILTADEGYPVVNLHGEALNKAEELGVTKVYLSISHSKTSAVANAILWSD.

Mg(2+) contacts are provided by aspartate 8 and glutamate 57.

This sequence belongs to the P-Pant transferase superfamily. AcpS family. The cofactor is Mg(2+).

Its subcellular location is the cytoplasm. It catalyses the reaction apo-[ACP] + CoA = holo-[ACP] + adenosine 3',5'-bisphosphate + H(+). Its function is as follows. Transfers the 4'-phosphopantetheine moiety from coenzyme A to a Ser of acyl-carrier-protein. This Natranaerobius thermophilus (strain ATCC BAA-1301 / DSM 18059 / JW/NM-WN-LF) protein is Holo-[acyl-carrier-protein] synthase.